Reading from the N-terminus, the 852-residue chain is MSSVNQIYDLFPNKHNIQFTDSHSQEHDTSSSLAKNDTDGTISIPGSIDTGILKSIIEEQGWNDAELYRSSIQNQRFFLTDKYTKKKHLTMEDMLSPEEEQIYQEPIQDFQTYNKRVQREYELRERMEEFFRQNTKNDLHILNEDSLNQQYSPLGPADYVLPLDRYSRMKHIASNFFRKKLGIPRKLKRRSHYNPNAEGHTKGNSSILSSTTDVIDNASYRNIAIDENVDITHKEHAIDEINEQGASGSESVVEGGSLLHDIEKVFNRSRATRKYHIQRKLKVRHIQMLSIGACFSVGLFLTSGKAFSIAGPFGTLLGFGLTGSIILATMLSFTELSTLIPVSSGFSGLASRFVEDAFGFALGWTYWISCMLALPAQVSSSTFYLSYYNNVNISKGVTAGFITLFSAFSIVVNLLDVSIMGEIVYVAGISKVIIAILMVFTMIILNAGHGNDIHEGVGFRYWDSSKSVRNLTYGLYRPTFDLADAGEGSKKGISGPKGRFLATASVMLISTFAFSGVEMTFLASGEAINPRKTIPSATKRTFSIVLISYVFLIFSVGINIYSGDPRLLSYFPGISEKRYEAIIKGTGMDWRLRTNCRGGIDYRQISVGTGYSSPWVVALQNFGLCTFASAFNAILIFFTATAGISSLFSCSRTLYAMSVQRKAPPVFEICSKRGVPYVSVIFSSLFSVIAYIAVDQTAIENFDVLANVSSASTSIIWMGLNLSFLRFYYALKQRKDIISRNDSSYPYKSPFQPYLAIYGLVGCSLFVIFMGYPNFIHHFWSTKAFFSAYGGLMFFFISYTAYKVLGTSKIQRLDQLDMDSGRREMDRTDWTEHSQYLGTYRERAKKLVTWLI.

The Cytoplasmic segment spans residues 1–285 (MSSVNQIYDL…HIQRKLKVRH (285 aa)). The interval 21 to 41 (DSHSQEHDTSSSLAKNDTDGT) is disordered. Positions 30-41 (SSSLAKNDTDGT) are enriched in polar residues. Residues 286–306 (IQMLSIGACFSVGLFLTSGKA) form a helical membrane-spanning segment. Residues 307–329 (FSIAGPFGTLLGFGLTGSIILAT) lie on the Extracellular side of the membrane. A helical membrane pass occupies residues 330–350 (MLSFTELSTLIPVSSGFSGLA). Residues 351–357 (SRFVEDA) are Cytoplasmic-facing. A helical membrane pass occupies residues 358 to 378 (FGFALGWTYWISCMLALPAQV). At 379–400 (SSSTFYLSYYNNVNISKGVTAG) the chain is on the extracellular side. The chain crosses the membrane as a helical span at residues 401 to 421 (FITLFSAFSIVVNLLDVSIMG). Position 422 (Glu-422) is a topological domain, cytoplasmic. The chain crosses the membrane as a helical span at residues 423-443 (IVYVAGISKVIIAILMVFTMI). At 444-500 (ILNAGHGNDIHEGVGFRYWDSSKSVRNLTYGLYRPTFDLADAGEGSKKGISGPKGRF) the chain is on the extracellular side. The chain crosses the membrane as a helical span at residues 501-521 (LATASVMLISTFAFSGVEMTF). The Cytoplasmic segment spans residues 522-540 (LASGEAINPRKTIPSATKR). The helical transmembrane segment at 541-561 (TFSIVLISYVFLIFSVGINIY) threads the bilayer. Residues 562 to 623 (SGDPRLLSYF…PWVVALQNFG (62 aa)) are Extracellular-facing. The helical transmembrane segment at 624–644 (LCTFASAFNAILIFFTATAGI) threads the bilayer. The Cytoplasmic segment spans residues 645–673 (SSLFSCSRTLYAMSVQRKAPPVFEICSKR). The chain crosses the membrane as a helical span at residues 674 to 694 (GVPYVSVIFSSLFSVIAYIAV). Residues 695-703 (DQTAIENFD) are Extracellular-facing. Residues 704–724 (VLANVSSASTSIIWMGLNLSF) form a helical membrane-spanning segment. The Cytoplasmic segment spans residues 725 to 755 (LRFYYALKQRKDIISRNDSSYPYKSPFQPYL). The chain crosses the membrane as a helical span at residues 756–776 (AIYGLVGCSLFVIFMGYPNFI). Topologically, residues 777 to 784 (HHFWSTKA) are extracellular. The chain crosses the membrane as a helical span at residues 785–805 (FFSAYGGLMFFFISYTAYKVL). Residues 806–852 (GTSKIQRLDQLDMDSGRREMDRTDWTEHSQYLGTYRERAKKLVTWLI) are Cytoplasmic-facing.

It belongs to the amino acid-polyamine-organocation (APC) superfamily. Component of the plasma membrane SPS (SSY1-PTR3-SSY5) amino acid sensor complex. Interacts directly with PTR3 and SSY5. Interacts with YCK1.

It localises to the cell membrane. In terms of biological role, amino acid sensor component of the SPS-sensor system, which regulates the expression of several amino acid-metabolizing enzymes and amino acid- and peptide-permeases in response to extracellular amino acid levels by controlling the activity of two transcription factors, STP1 and STP2. Amino-acid permease homolog that seems to interact directly with the extracellular signaling molecules, but has no amino acid transporter activity. May recruit casein kinases YCK1 and YCK2 to hyperphosphorylate and activate downstream component PTR3 in response to amino acid stimulus. The polypeptide is SPS-sensor component SSY1 (SSY1) (Saccharomyces cerevisiae (strain ATCC 204508 / S288c) (Baker's yeast)).